Reading from the N-terminus, the 266-residue chain is Hydroxyethylthiazole kinase (266 aa).

Methionine 45 is a substrate binding site. 2 residues coordinate ATP: lysine 121 and serine 167. Residue glycine 194 participates in substrate binding.

It belongs to the Thz kinase family. Mg(2+) is required as a cofactor.

It catalyses the reaction 5-(2-hydroxyethyl)-4-methylthiazole + ATP = 4-methyl-5-(2-phosphooxyethyl)-thiazole + ADP + H(+). Its pathway is cofactor biosynthesis; thiamine diphosphate biosynthesis; 4-methyl-5-(2-phosphoethyl)-thiazole from 5-(2-hydroxyethyl)-4-methylthiazole: step 1/1. In terms of biological role, catalyzes the phosphorylation of the hydroxyl group of 4-methyl-5-beta-hydroxyethylthiazole (THZ). The chain is Hydroxyethylthiazole kinase from Methanocella arvoryzae (strain DSM 22066 / NBRC 105507 / MRE50).